The chain runs to 225 residues: Sugar fermentation stimulation protein homolog (225 aa).

Belongs to the SfsA family.

In Sulfurisphaera tokodaii (strain DSM 16993 / JCM 10545 / NBRC 100140 / 7) (Sulfolobus tokodaii), this protein is Sugar fermentation stimulation protein homolog.